The primary structure comprises 199 residues: Recombination protein RecR (199 aa).

The C4-type zinc-finger motif lies at 58-73 (CKKCFNLTSEEECEIC). In terms of domain architecture, Toprim spans 81–175 (KIICVVAETK…KVTRIAYGLP (95 aa)).

It belongs to the RecR family.

In terms of biological role, may play a role in DNA repair. It seems to be involved in an RecBC-independent recombinational process of DNA repair. It may act with RecF and RecO. This Prochlorococcus marinus subsp. pastoris (strain CCMP1986 / NIES-2087 / MED4) protein is Recombination protein RecR.